Reading from the N-terminus, the 600-residue chain is DDB1- and CUL4-associated factor 8-like protein 1 (600 aa).

The disordered stretch occupies residues 1 to 122; the sequence is MSHQEGSTGG…EEEQPRMCPR (122 aa). Acidic residues-rich tracts occupy residues 74–83 and 96–115; these read SSSEDVELES and EETEREEEEEEMEEEGEEEE. WD repeat units lie at residues 194-233, 237-278, 284-324, 332-372, 388-427, 435-475, and 479-518; these read SHAGSVSTIHFNQRGTRLASSGDDLRVIVWDWVRQKPVLN, GHDI…YCEN, KHRG…PASK, DKKV…KKEN, DFPTNITCVVYSHDGTELLASYNDEDIYLFNSSLSDGAQY, RNND…IIQF, and DRGDIVNCLEPHPYLPVLATSGLDQHVRIWTPTAKTATEL. The tract at residues 562–600 is disordered; that stretch reads PGWRDHGAEFPDEEELDESSSTSDTSEEEGQDRVQCIPS.

This sequence belongs to the WD repeat DCAF8 family.

This is DDB1- and CUL4-associated factor 8-like protein 1 (DCAF8L1) from Homo sapiens (Human).